The primary structure comprises 228 residues: Cytokinin riboside 5'-monophosphate phosphoribohydrolase LOG5 (228 aa).

Substrate-binding positions include Glu-79, 97–98, and 114–120; these read RK and GYGTLEE.

This sequence belongs to the LOG family. As to expression, expressed in roots and shoots. Detected in vascular tissues of roots, cotyledons, and leaves, axillary buds, immature and mature flowers, fruit abscission zones and ovules.

It localises to the cytoplasm. The protein localises to the nucleus. It carries out the reaction N(6)-(dimethylallyl)adenosine 5'-phosphate + H2O = N(6)-dimethylallyladenine + D-ribose 5-phosphate. The catalysed reaction is 9-ribosyl-trans-zeatin 5'-phosphate + H2O = trans-zeatin + D-ribose 5-phosphate. Functionally, cytokinin-activating enzyme working in the direct activation pathway. Phosphoribohydrolase that converts inactive cytokinin nucleotides to the biologically active free-base forms. The polypeptide is Cytokinin riboside 5'-monophosphate phosphoribohydrolase LOG5 (LOG5) (Arabidopsis thaliana (Mouse-ear cress)).